Here is a 206-residue protein sequence, read N- to C-terminus: LexA repressor (206 aa).

The segment at residues 28–48 is a DNA-binding region (H-T-H motif); it reads RAEIASELGFKSANAAEEHLK. Active-site for autocatalytic cleavage activity residues include S122 and K160.

Belongs to the peptidase S24 family. Homodimer.

It carries out the reaction Hydrolysis of Ala-|-Gly bond in repressor LexA.. Its function is as follows. Represses a number of genes involved in the response to DNA damage (SOS response), including recA and lexA. In the presence of single-stranded DNA, RecA interacts with LexA causing an autocatalytic cleavage which disrupts the DNA-binding part of LexA, leading to derepression of the SOS regulon and eventually DNA repair. The protein is LexA repressor of Tolumonas auensis (strain DSM 9187 / NBRC 110442 / TA 4).